We begin with the raw amino-acid sequence, 65 residues long: Conotoxin Cal1.5 (65 aa).

Residues 1-18 (MRCLPVFIILLLLASTAA) form the signal peptide. Positions 19 to 49 (VDVAGSKLKRRLERKPYQGSQAYVKKTAFGL) are excised as a propeptide. 2 cysteine pairs are disulfide-bonded: Cys-52-Cys-62 and Cys-53-Cys-59. 4-hydroxyproline is present on Pro-61.

It belongs to the conotoxin T superfamily. As to expression, expressed by the venom duct.

It is found in the secreted. Its function is as follows. Probable neurotoxin with unknown target. Possibly targets ion channels. The sequence is that of Conotoxin Cal1.5 from Californiconus californicus (California cone).